The sequence spans 311 residues: p-hydroxybenzoic acid efflux pump subunit AaeA (311 aa).

A helical membrane pass occupies residues 11-31 (VGITVLVVVLAVIAIFNVWAF).

This sequence belongs to the membrane fusion protein (MFP) (TC 8.A.1) family.

It is found in the cell inner membrane. Functionally, forms an efflux pump with AaeB. This is p-hydroxybenzoic acid efflux pump subunit AaeA from Yersinia pestis bv. Antiqua (strain Antiqua).